A 154-amino-acid chain; its full sequence is UPF0039 protein sll0451 (154 aa).

Residues 8 to 151 (QRFNDISGEA…EHISMIFRVP (144 aa)) form the N-acetyltransferase domain.

Belongs to the UPF0039 (ElaA) family.

This is UPF0039 protein sll0451 from Synechocystis sp. (strain ATCC 27184 / PCC 6803 / Kazusa).